A 396-amino-acid polypeptide reads, in one-letter code: Inositol polyphosphate multikinase (396 aa).

A compositionally biased stretch (low complexity) spans Met1–Pro13. The disordered stretch occupies residues Met1–Val22. Ala2 is subject to N-acetylalanine. Phosphoserine is present on Ser19. Lys58 is a binding site for ATP. Arg65 contributes to the substrate binding site. ATP contacts are provided by residues Glu114 to Val116 and Asp127. Residues Lys129, Lys143–Lys150, and Gln179 contribute to the substrate site. The Nuclear localization signal motif lies at Arg300–Gln310. Asp365 contacts ATP.

This sequence belongs to the inositol phosphokinase (IPK) family. Mg(2+) serves as cofactor.

Its subcellular location is the nucleus. The enzyme catalyses 1D-myo-inositol 1,4,5-trisphosphate + 2 ATP = 1D-myo-inositol 1,3,4,5,6-pentakisphosphate + 2 ADP + 2 H(+). It catalyses the reaction 1D-myo-inositol 1,3,4,6-tetrakisphosphate + ATP = 1D-myo-inositol 1,3,4,5,6-pentakisphosphate + ADP + H(+). The catalysed reaction is 1-octadecanoyl-2-(5Z,8Z,11Z,14Z)-eicosatetraenoyl-sn-glycero-3-phospho-1D-myo-inositol 4,5-bisphosphate + ATP = 1-octadecanoyl-2-(5Z,8Z,11Z,14Z-eicosatetraenoyl)-sn-glycero-3-phospho-(1D-myo-inositol 3,4,5-triphosphate) + ADP + H(+). It carries out the reaction a 1,2-diacyl-sn-glycero-3-phospho-(1D-myo-inositol-4,5-bisphosphate) + ATP = a 1,2-diacyl-sn-glycero-3-phospho-(1D-myo-inositol-3,4,5-trisphosphate) + ADP + H(+). The enzyme catalyses 1D-myo-inositol 1,4,5,6-tetrakisphosphate + ATP = 1D-myo-inositol 1,3,4,5,6-pentakisphosphate + ADP + H(+). Its pathway is phospholipid metabolism; phosphatidylinositol metabolism. In terms of biological role, inositol phosphate kinase with a broad substrate specificity. Phosphorylates inositol 1,4,5-trisphosphate (Ins(1,4,5)P3) first to inositol 1,3,4,5-tetrakisphosphate and then to inositol 1,3,4,5,6-pentakisphosphate (Ins(1,3,4,5,6)P5). Phosphorylates inositol 1,3,4,6-tetrakisphosphate (Ins(1,3,4,6)P4). Phosphorylates inositol 1,4,5,6-tetrakisphosphate (Ins(1,4,5,6)P4). Phosphorylates glycero-3-phospho-1D-myo-inositol 4,5-bisphosphate to glycero-3-phospho-1D-myo-inositol 3,4,5-trisphosphate. Plays an important role in MLKL-mediated necroptosis via its role in the biosynthesis of inositol pentakisphosphate (InsP5) and inositol hexakisphosphate (InsP6). Binding of these highly phosphorylated inositol phosphates to MLKL mediates the release of an N-terminal auto-inhibitory region, leading to activation of the kinase. Essential for activated phospho-MLKL to oligomerize and localize to the cell membrane during necroptosis. Required for normal embryonic development, probably via its role in the biosynthesis of inositol 1,3,4,5,6-pentakisphosphate (Ins(1,3,4,5,6)P5) and inositol hexakisphosphate (InsP6). This chain is Inositol polyphosphate multikinase (Ipmk), found in Mus musculus (Mouse).